Consider the following 30-residue polypeptide: Phospholipase A2 acanmyotoxin-2 (30 aa).

2 residues coordinate Ca(2+): tyrosine 28 and glycine 30.

Ca(2+) serves as cofactor. In terms of processing, contains seven disulfide bonds. Expressed by the venom gland.

It is found in the secreted. It catalyses the reaction a 1,2-diacyl-sn-glycero-3-phosphocholine + H2O = a 1-acyl-sn-glycero-3-phosphocholine + a fatty acid + H(+). In terms of biological role, snake venom phospholipase A2 (PLA2) that has myotoxic activity but no significant neurotoxicity. PLA2 catalyzes the calcium-dependent hydrolysis of the 2-acyl groups in 3-sn-phosphoglycerides. In Acanthophis sp. (strain Seram) (Seram death adder), this protein is Phospholipase A2 acanmyotoxin-2.